A 92-amino-acid polypeptide reads, in one-letter code: DNA-binding protein HU (92 aa).

The protein belongs to the bacterial histone-like protein family. Homodimer.

Functionally, histone-like DNA-binding protein which is capable of wrapping DNA to stabilize it, and thus to prevent its denaturation under extreme environmental conditions. This Buchnera aphidicola subsp. Baizongia pistaciae (strain Bp) protein is DNA-binding protein HU (hup).